Here is a 156-residue protein sequence, read N- to C-terminus: Glycine cleavage system H protein 2, mitochondrial (156 aa).

Residues 1–23 (MACRLFWASRVASHLRISVAQRG) constitute a mitochondrion transit peptide. The Lipoyl-binding domain occupies 47–129 (KATFGITDHA…YEQGWIIKVE (83 aa)). Lysine 88 carries the N6-lipoyllysine modification. Serine 131 carries the phosphoserine modification.

Belongs to the GcvH family. The glycine cleavage system is composed of four proteins: P, T, L and H. The cofactor is (R)-lipoate.

It is found in the mitochondrion. In terms of biological role, the glycine decarboxylase (GDC) or glycine cleavage system catalyzes the degradation of glycine. The H protein shuttles the methylamine group of glycine from the P protein to the T protein. This is Glycine cleavage system H protein 2, mitochondrial (GDH2) from Arabidopsis thaliana (Mouse-ear cress).